The sequence spans 391 residues: Inner membrane protein YdcO (391 aa).

Residues 1–9 (MRLFSIPPP) are Cytoplasmic-facing. The chain crosses the membrane as a helical span at residues 10–30 (TLLAGFLAVLIGYASSAAIIW). Over 31–42 (QAAIVAGATTAQ) the chain is Periplasmic. A helical transmembrane segment spans residues 43 to 63 (ISGWMTALGLAMGVSTLTLTL). Residues 64–93 (WYRVPVLTAWSTPGAALLVTGLQGLTLNEA) are Cytoplasmic-facing. Residues 94–114 (IGVFIVTNALIVLCGITGLFA) traverse the membrane as a helical segment. Residues 115-123 (RLMRIIPHS) are Periplasmic-facing. A helical membrane pass occupies residues 124 to 144 (LAAAMLAGILLRFGLQAFASL). The Cytoplasmic portion of the chain corresponds to 145 to 167 (DGQFTLCGSMLLVWLATKAVAPR). A helical transmembrane segment spans residues 168-188 (YAVIAAMIIGIVIVIAQGDVV). Over 189–200 (TTDVVFKPVLPT) the chain is Periplasmic. The chain crosses the membrane as a helical span at residues 201–221 (YITPDFSFAHSLSVALPLFLV). Residues 222–246 (TMASQNAPGIAAMKAAGYSAPVSPL) lie on the Cytoplasmic side of the membrane. A helical membrane pass occupies residues 247–267 (IVFTGLLALVFSPFGVYSVGI). Over 268–287 (AAITAAICQSPEAHPDKDQR) the chain is Periplasmic. Residues 288-308 (WLAAAVAGIFYLLAGLFGSAI) form a helical membrane-spanning segment. The Cytoplasmic portion of the chain corresponds to 309–311 (TGM). The chain crosses the membrane as a helical span at residues 312–332 (MAALPVSWIQMLAGLALLSTI). At 333–361 (GGSLYQALHNERERDAAVVAFLVTASGLT) the chain is on the periplasmic side. Residues 362–382 (LVGIGSAFWGLIAGGVCYVVL) form a helical membrane-spanning segment. Residues 383–391 (NLIADRNRY) are Cytoplasmic-facing.

Its subcellular location is the cell inner membrane. This Escherichia coli (strain K12) protein is Inner membrane protein YdcO (ydcO).